A 156-amino-acid chain; its full sequence is Putative type II restriction enzyme ApeKORF2002P (156 aa).

The protein to M.jannaschii MJ1199.

It carries out the reaction Endonucleolytic cleavage of DNA to give specific double-stranded fragments with terminal 5'-phosphates.. A putative type II restriction enzyme, its methylase would be APE_2002. This is Putative type II restriction enzyme ApeKORF2002P from Aeropyrum pernix (strain ATCC 700893 / DSM 11879 / JCM 9820 / NBRC 100138 / K1).